The following is a 115-amino-acid chain: Large ribosomal subunit protein bL19 (115 aa).

This sequence belongs to the bacterial ribosomal protein bL19 family.

Its function is as follows. This protein is located at the 30S-50S ribosomal subunit interface and may play a role in the structure and function of the aminoacyl-tRNA binding site. The polypeptide is Large ribosomal subunit protein bL19 (Francisella tularensis subsp. mediasiatica (strain FSC147)).